We begin with the raw amino-acid sequence, 212 residues long: Large ribosomal subunit protein bL25 (212 aa).

A disordered region spans residues 1 to 25 (MSQSTIHKIAVKKRTETGKNENNRL). Basic and acidic residues predominate over residues 13–24 (KRTETGKNENNR).

This sequence belongs to the bacterial ribosomal protein bL25 family. CTC subfamily. As to quaternary structure, part of the 50S ribosomal subunit; part of the 5S rRNA/L5/L18/L25 subcomplex. Contacts the 5S rRNA. Binds to the 5S rRNA independently of L5 and L18.

This is one of the proteins that binds to the 5S RNA in the ribosome where it forms part of the central protuberance. This is Large ribosomal subunit protein bL25 from Leptospira borgpetersenii serovar Hardjo-bovis (strain L550).